Reading from the N-terminus, the 308-residue chain is uncharacterized protein (308 aa).

Positions 43–55 are enriched in polar residues; it reads SQYGTWADQHQNG. Residues 43–289 are disordered; the sequence is SQYGTWADQH…KEERSEECSP (247 aa). S62 carries the phosphoserine modification. The segment covering 80 to 90 has biased composition (polar residues); the sequence is HLSSYTESTSV. Over residues 91 to 109 the composition is skewed to basic and acidic residues; the sequence is EQRDSSRDRRSSSVDRSSS. Residues 136–152 are compositionally biased toward polar residues; that stretch reads IHQTSVLDSSALKTRVQ. Over residues 153-168 the composition is skewed to basic residues; that stretch reads LSKRSRRRAPISHSLR. At S166 the chain carries Phosphoserine. 2 stretches are compositionally biased toward basic and acidic residues: residues 175–186 and 193–216; these read SESRSPLEEESH and DSTE…ERTP. Phosphoserine occurs at positions 205, 259, 262, and 288.

This is an uncharacterized protein from Mus musculus (Mouse).